Reading from the N-terminus, the 293-residue chain is tRNA pseudouridine synthase B (293 aa).

Catalysis depends on aspartate 39, which acts as the Nucleophile.

The protein belongs to the pseudouridine synthase TruB family. Type 1 subfamily.

It carries out the reaction uridine(55) in tRNA = pseudouridine(55) in tRNA. Its function is as follows. Responsible for synthesis of pseudouridine from uracil-55 in the psi GC loop of transfer RNAs. The polypeptide is tRNA pseudouridine synthase B (Streptococcus mutans serotype c (strain ATCC 700610 / UA159)).